A 146-amino-acid polypeptide reads, in one-letter code: UPF0178 protein BC_3040 (146 aa).

This sequence belongs to the UPF0178 family.

The protein is UPF0178 protein BC_3040 of Bacillus cereus (strain ATCC 14579 / DSM 31 / CCUG 7414 / JCM 2152 / NBRC 15305 / NCIMB 9373 / NCTC 2599 / NRRL B-3711).